We begin with the raw amino-acid sequence, 359 residues long: Peptide chain release factor 1 (359 aa).

Glutamine 235 carries the post-translational modification N5-methylglutamine.

This sequence belongs to the prokaryotic/mitochondrial release factor family. In terms of processing, methylated by PrmC. Methylation increases the termination efficiency of RF1.

It is found in the cytoplasm. Peptide chain release factor 1 directs the termination of translation in response to the peptide chain termination codons UAG and UAA. This Anaplasma marginale (strain Florida) protein is Peptide chain release factor 1.